The primary structure comprises 467 residues: Argininosuccinate lyase (467 aa).

The 2-(N(omega)-L-arginino)succinate site is built by serine 27, asparagine 114, and threonine 159. Histidine 160 acts as the Proton acceptor in catalysis. Residue serine 281 is the Proton donor of the active site. Residues asparagine 289, tyrosine 321, glutamine 326, and lysine 329 each coordinate 2-(N(omega)-L-arginino)succinate.

This sequence belongs to the lyase 1 family. Argininosuccinate lyase subfamily. In terms of assembly, homotetramer.

It carries out the reaction 2-(N(omega)-L-arginino)succinate = fumarate + L-arginine. It participates in amino-acid biosynthesis; L-arginine biosynthesis; L-arginine from L-ornithine and carbamoyl phosphate: step 3/3. It functions in the pathway nitrogen metabolism; urea cycle; L-arginine and fumarate from (N(omega)-L-arginino)succinate: step 1/1. The chain is Argininosuccinate lyase (ASL) from Aquarana catesbeiana (American bullfrog).